The following is a 228-amino-acid chain: D-lyxose/D-mannose isomerase (228 aa).

Positions 103, 105, 110, and 171 each coordinate Mn(2+).

Belongs to the D-lyxose ketol-isomerase family. In terms of assembly, homodimer. The cofactor is Mn(2+).

It catalyses the reaction D-lyxose = D-xylulose. It carries out the reaction D-mannose = D-fructose. Sugar isomerase that catalyzes the reversible isomerization of D-lyxose to D-xylulose, and D-mannose to D-fructose. Shows optimum activity using D-lyxose as substrate, but can also effectively catalyze the isomerization between D-fructose and D-mannose. Shows lower activity with L-gulose, D-talose and L-ribose. This chain is D-lyxose/D-mannose isomerase, found in Serratia proteamaculans.